A 117-amino-acid chain; its full sequence is Large ribosomal subunit protein bL20 (117 aa).

This sequence belongs to the bacterial ribosomal protein bL20 family.

In terms of biological role, binds directly to 23S ribosomal RNA and is necessary for the in vitro assembly process of the 50S ribosomal subunit. It is not involved in the protein synthesizing functions of that subunit. The chain is Large ribosomal subunit protein bL20 from Aliivibrio salmonicida (strain LFI1238) (Vibrio salmonicida (strain LFI1238)).